The sequence spans 35 residues: Photosystem II reaction center protein Psb30 (35 aa).

The helical transmembrane segment at 7–27 (VFVQLLLLALIVLAGPAVILL) threads the bilayer.

This sequence belongs to the Psb30/Ycf12 family. PSII is composed of 1 copy each of membrane proteins PsbA, PsbB, PsbC, PsbD, PsbE, PsbF, PsbH, PsbI, PsbJ, PsbK, PsbL, PsbM, PsbT, PsbX, PsbY, PsbZ, Psb30/Ycf12, peripheral proteins PsbO, CyanoQ (PsbQ), PsbU, PsbV and a large number of cofactors. It forms dimeric complexes.

It is found in the cellular thylakoid membrane. Functionally, a core subunit of photosystem II (PSII), probably helps stabilize the reaction center. This is Photosystem II reaction center protein Psb30 from Synechococcus sp. (strain JA-3-3Ab) (Cyanobacteria bacterium Yellowstone A-Prime).